The sequence spans 1007 residues: MKLSSACAIALLAAQAAGASIKHRINGFTLTEHSDPAKRELLQKYVTWDDKSLFINGERIMIFSGEFHPFRLPVKELQLDIFQKVKALGFNCVSFYVDWALVEGKPGEYRADGIFDLEPFFDAASEAGIYLLARPGPYINAESSGGGFPGWLQRVNGTLRSSDKAYLDATDNYVSHVAATIAKYQITNGGPIILYQPENEYTSGCCGVEFPDPVYMQYVEDQARNAGVVIPLINNDASASGNNAPGTGKGAVDIYGHDSYPLGFDCANPTVWPSGDLPTNFRTLHLEQSPTTPYAIVEFQGGSYDPWGGPGFAACSELLNNEFERVFYKNDFSFQIAIMNLYMIFGGTNWGNLGYPNGYTSYDYGSAVTESRNITREKYSELKLLGNFAKVSPGYLTASPGNLTTSGYADTTDLTVTPLLGNSTGSFFVVRHSDYSSEESTSYKLRLPTSAGSVTIPQLGGTLTLNGRDSKIHVTDYNVSGTNIIYSTAEVFTWKKFADGKVLVLYGGAGEHHELAISTKSNVTVIEGSESGISSKQTSSSVVVGWDVSTTRRIIQVGDLKILLLDRNSAYNYWVPQLATDGTSPGFSTPEKVASSIIVKAGYLVRTAYLKGSGLYLTADFNATTSVEVIGVPSTAKNLFINGDKTSHTVDKNGIWSATVDYNAPDISLPSLKDLDWKYVDTLPEIQSSYDDSLWPAADLKQTKNTLRSLTTPTSLYSSDYGFHTGYLLYRGHFTATGNESTFAIDTQGGSAFGSSVWLNGTYLGSWTGLYANSDYNATYNLPQLQAGKTYVITVVIDNMGLEENWTVGEDLMKTPRGILNFLLAGRPSSAISWKLTGNLGGEDYEDKVRGPLNEGGLYAERQGFHQPEPPSQNWKSSSPLEGLSEAGIGFYSASFDLDLPKGWDVPLFLNIGNSTTPSPYRVQVYVNGYQYAKYISNIGPQTSFPVPEGILNYRGTNWLAVTLWALDSAGGKLESLELSYTTPVLTALGEVESVDQPKYKKRKGAY.

The N-terminal stretch at 1-18 (MKLSSACAIALLAAQAAG) is a signal peptide. Substrate is bound by residues tyrosine 96 and 140-142 (NAE). An N-linked (GlcNAc...) asparagine glycan is attached at asparagine 156. Substrate is bound at residue asparagine 199. The active-site Proton donor is glutamate 200. 2 disulfides stabilise this stretch: cysteine 205–cysteine 206 and cysteine 266–cysteine 315. Catalysis depends on glutamate 298, which acts as the Nucleophile. Residue tyrosine 364 coordinates substrate. Asparagine 402, asparagine 422, asparagine 478, asparagine 522, asparagine 622, asparagine 739, asparagine 760, asparagine 777, asparagine 805, and asparagine 914 each carry an N-linked (GlcNAc...) asparagine glycan.

Belongs to the glycosyl hydrolase 35 family.

It is found in the secreted. The catalysed reaction is Hydrolysis of terminal non-reducing beta-D-galactose residues in beta-D-galactosides.. Its function is as follows. Cleaves beta-linked terminal galactosyl residues from gangliosides, glycoproteins, and glycosaminoglycans. The polypeptide is Beta-galactosidase A (lacA) (Aspergillus niger (strain ATCC MYA-4892 / CBS 513.88 / FGSC A1513)).